Here is a 248-residue protein sequence, read N- to C-terminus: Pyridoxine 5'-phosphate synthase (248 aa).

N12 contacts 3-amino-2-oxopropyl phosphate. Position 14–15 (14–15 (DH)) interacts with 1-deoxy-D-xylulose 5-phosphate. R23 contacts 3-amino-2-oxopropyl phosphate. Residue H48 is the Proton acceptor of the active site. 1-deoxy-D-xylulose 5-phosphate-binding residues include R50 and H55. The active-site Proton acceptor is E75. T105 provides a ligand contact to 1-deoxy-D-xylulose 5-phosphate. The active-site Proton donor is the H196. 3-amino-2-oxopropyl phosphate contacts are provided by residues G197 and 218–219 (GH).

The protein belongs to the PNP synthase family. Homooctamer; tetramer of dimers.

The protein resides in the cytoplasm. The catalysed reaction is 3-amino-2-oxopropyl phosphate + 1-deoxy-D-xylulose 5-phosphate = pyridoxine 5'-phosphate + phosphate + 2 H2O + H(+). It functions in the pathway cofactor biosynthesis; pyridoxine 5'-phosphate biosynthesis; pyridoxine 5'-phosphate from D-erythrose 4-phosphate: step 5/5. Functionally, catalyzes the complicated ring closure reaction between the two acyclic compounds 1-deoxy-D-xylulose-5-phosphate (DXP) and 3-amino-2-oxopropyl phosphate (1-amino-acetone-3-phosphate or AAP) to form pyridoxine 5'-phosphate (PNP) and inorganic phosphate. The chain is Pyridoxine 5'-phosphate synthase from Stutzerimonas stutzeri (strain A1501) (Pseudomonas stutzeri).